A 330-amino-acid polypeptide reads, in one-letter code: Putative [LysW]-L-2-aminoadipate/[LysW]-L-glutamate phosphate reductase (330 aa).

Residues S10 to I13 and S34 to R36 each bind NADP(+). The active site involves C142. Residue N297 coordinates NADP(+).

The protein belongs to the NAGSA dehydrogenase family. Type 1 subfamily. LysY sub-subfamily.

It localises to the cytoplasm. The enzyme catalyses [amino-group carrier protein]-C-terminal-N-(1-carboxy-5-oxopentan-1-yl)-L-glutamine + phosphate + NADP(+) = [amino-group carrier protein]-C-terminal-N-(1-carboxy-5-phosphooxy-5-oxopentan-1-yl)-L-glutamine + NADPH + H(+). It catalyses the reaction [amino-group carrier protein]-C-terminal-gamma-(L-glutamyl-5-semialdehyde)-L-glutamate + phosphate + NADP(+) = [amino-group carrier protein]-C-terminal-gamma-(5-phospho-L-glutamyl)-L-glutamate + NADPH + H(+). Its pathway is amino-acid biosynthesis; L-lysine biosynthesis via AAA pathway; L-lysine from L-alpha-aminoadipate (Thermus route): step 3/5. It functions in the pathway amino-acid biosynthesis; L-arginine biosynthesis. Involved in both the arginine and lysine biosynthetic pathways. In Thermococcus kodakarensis (strain ATCC BAA-918 / JCM 12380 / KOD1) (Pyrococcus kodakaraensis (strain KOD1)), this protein is Putative [LysW]-L-2-aminoadipate/[LysW]-L-glutamate phosphate reductase.